A 116-amino-acid chain; its full sequence is Large ribosomal subunit protein bL20 (116 aa).

Belongs to the bacterial ribosomal protein bL20 family.

Its function is as follows. Binds directly to 23S ribosomal RNA and is necessary for the in vitro assembly process of the 50S ribosomal subunit. It is not involved in the protein synthesizing functions of that subunit. In Fusobacterium nucleatum subsp. nucleatum (strain ATCC 25586 / DSM 15643 / BCRC 10681 / CIP 101130 / JCM 8532 / KCTC 2640 / LMG 13131 / VPI 4355), this protein is Large ribosomal subunit protein bL20.